The primary structure comprises 551 residues: Calcium-dependent protein kinase 19 (551 aa).

Glycine 2 carries the N-myristoyl glycine lipid modification. The segment at 12 to 46 (VKKPTPDISGEQNTEVKSREITPKEQPRQRQPAPR) is disordered. A compositionally biased stretch (basic and acidic residues) spans 25 to 39 (TEVKSREITPKEQPR). The Protein kinase domain maps to 98 to 357 (YSLGRELGRG…AAQVLEHPWI (260 aa)). ATP contacts are provided by residues 104–112 (LGRGQFGIT) and lysine 127. Aspartate 222 acts as the Proton acceptor in catalysis. Serine 263 is modified (phosphoserine). The tract at residues 363 to 393 (ASDKPIDSAVLSRMKQLRAMNKLKKLAFKFI) is autoinhibitory domain. 4 EF-hand domains span residues 400 to 435 (EELK…LGSR), 436 to 471 (LTET…RFRV), 472 to 507 (ERED…YNMG), and 512 to 542 (IKEI…CSQS). Residues aspartate 413, aspartate 415, serine 417, threonine 419, glutamate 424, aspartate 449, aspartate 451, asparagine 453, threonine 455, glutamate 460, aspartate 485, aspartate 487, serine 489, glutamate 496, aspartate 520, aspartate 522, aspartate 524, serine 526, and glutamate 531 each coordinate Ca(2+).

Belongs to the protein kinase superfamily. Ser/Thr protein kinase family. CDPK subfamily.

It is found in the membrane. It carries out the reaction L-seryl-[protein] + ATP = O-phospho-L-seryl-[protein] + ADP + H(+). The enzyme catalyses L-threonyl-[protein] + ATP = O-phospho-L-threonyl-[protein] + ADP + H(+). With respect to regulation, activated by calcium. Autophosphorylation may play an important role in the regulation of the kinase activity. In terms of biological role, may play a role in signal transduction pathways that involve calcium as a second messenger. This chain is Calcium-dependent protein kinase 19 (CPK19), found in Arabidopsis thaliana (Mouse-ear cress).